The primary structure comprises 358 residues: L-tryptophan methyltransferase trpM (358 aa).

It belongs to the methyltransferase superfamily.

The enzyme catalyses L-tryptophan + S-adenosyl-L-methionine = N(alpha)-methyl-L-tryptophan + S-adenosyl-L-homocysteine + H(+). The catalysed reaction is N(alpha)-methyl-L-tryptophan + S-adenosyl-L-methionine = N(alpha),N(alpha)-dimethyl-L-tryptophan + S-adenosyl-L-homocysteine + H(+). It carries out the reaction N(alpha),N(alpha)-dimethyl-L-tryptophan + S-adenosyl-L-methionine = N(alpha),N(alpha),N(alpha)-trimethyl-L-tryptophan + S-adenosyl-L-homocysteine + H(+). Functionally, methyltransferase that catalyzes iterative L-tryptophan N-methylations to produce L-abrine (N-alpha-methyl-L-tryptophan) and N,N-alpha-dimethyl-L-tryptophan. Also catalyzes a third methylation to yield L-hypaphorine (N,N,N-alpha-trimethyl-L-tryptopan), an agonist of the phytohormone indole-3-acetic acid. Can also N-methylate the non-native amino acid substrate 4-hydroxytryptophan, but the ability to incorporate trpM into a functional psilocybin biosynthesis pathway is indeed thwarted by the inability of the L-tryptophan decarboxylase psiD to use N,N-dimethyl-4-hydroxytryptophan as substrate. The protein is L-tryptophan methyltransferase trpM of Psilocybe serbica.